The following is a 247-amino-acid chain: Protein ABHD14A (247 aa).

Residues 11 to 31 (AALLGLGLLLVFLLYMGLPGP) traverse the membrane as a helical; Signal-anchor for type II membrane protein segment. Asn43 is a glycosylation site (N-linked (GlcNAc...) asparagine). Catalysis depends on charge relay system residues Ser147, Asp198, and His225.

This sequence belongs to the AB hydrolase superfamily. ABHD14 family. In terms of tissue distribution, widely expressed. Higher expression is detected in brain, kidney, heart, testis, ovary and uterus.

It is found in the cytoplasm. The protein resides in the membrane. Possible role in granule neuron development. This is Protein ABHD14A from Mus musculus (Mouse).